The sequence spans 445 residues: 6-phosphogluconate dehydrogenase, decarboxylating (445 aa).

NADP(+) is bound by residues 1-4 (AVMG), 22-24 (NRS), 63-65 (VKA), and Asn-91. Residues Asn-91 and 117–119 (SGG) contribute to the substrate site. Lys-172 (proton acceptor) is an active-site residue. Residue 175-176 (HN) participates in substrate binding. Glu-179 (proton donor) is an active-site residue. Substrate-binding residues include Tyr-180, Lys-249, Arg-276, Arg-434, and His-440.

This sequence belongs to the 6-phosphogluconate dehydrogenase family. As to quaternary structure, homodimer.

The catalysed reaction is 6-phospho-D-gluconate + NADP(+) = D-ribulose 5-phosphate + CO2 + NADPH. It participates in carbohydrate degradation; pentose phosphate pathway; D-ribulose 5-phosphate from D-glucose 6-phosphate (oxidative stage): step 3/3. Its function is as follows. Catalyzes the oxidative decarboxylation of 6-phosphogluconate to ribulose 5-phosphate and CO(2), with concomitant reduction of NADP to NADPH. This Raoultella terrigena (Klebsiella terrigena) protein is 6-phosphogluconate dehydrogenase, decarboxylating (gnd).